We begin with the raw amino-acid sequence, 195 residues long: Pyruvoyl-dependent arginine decarboxylase AaxB (195 aa).

Residue serine 53 is modified to Pyruvic acid (Ser).

The protein belongs to the pyruvoyl-dependent arginine decarboxylase family. As to quaternary structure, trimer of an alpha-beta dimer. The cofactor is pyruvate.

The protein localises to the cytoplasm. It carries out the reaction L-arginine + H(+) = agmatine + CO2. Part of the AaxABC system, catalyzes the decarboxylation of L-arginine. The arginine uptake by the bacterium in the macrophage may be a virulence factor against the host innate immune response. The polypeptide is Pyruvoyl-dependent arginine decarboxylase AaxB (aaxB) (Chlamydia trachomatis serovar D (strain ATCC VR-885 / DSM 19411 / UW-3/Cx)).